The following is a 327-amino-acid chain: Aspartate--ammonia ligase (327 aa).

The protein belongs to the class-II aminoacyl-tRNA synthetase family. AsnA subfamily.

It is found in the cytoplasm. The catalysed reaction is L-aspartate + NH4(+) + ATP = L-asparagine + AMP + diphosphate + H(+). The protein operates within amino-acid biosynthesis; L-asparagine biosynthesis; L-asparagine from L-aspartate (ammonia route): step 1/1. This is Aspartate--ammonia ligase from Bacillus cereus (strain AH820).